A 205-amino-acid chain; its full sequence is MAASTASHRPIKGILKNKTSTTSSMVASAEQPRRSVDEELSKKSQKWDEINILATYHPADKGYGLMKIDEPSPPYHSMMGDDEDACRDTETTEAMAPDILAKKLAAAEGLEPKYRIQEQESSGEEDSDLSPEEREKKRQFEMRRKLHYNEGLNIKLARQLISKDLHDDDEDEEMLETADGESMNTEESNQGSTPSDQQQNKLRSS.

Positions 1-44 (MAASTASHRPIKGILKNKTSTTSSMVASAEQPRRSVDEELSKKS) are disordered. The residue at position 2 (Ala-2) is an N-acetylalanine. 2 required for binding PPP1CC regions span residues 12–17 (KGILKN) and 43–55 (KSQKWDEINILAT). Residues 17–26 (NKTSTTSSMV) show a composition bias toward polar residues. A compositionally biased stretch (basic and acidic residues) spans 31–44 (QPRRSVDEELSKKS). Ser-44 is subject to Phosphoserine. Residues Thr-89 and Thr-92 each carry the phosphothreonine modification. Residues 111–142 (EPKYRIQEQESSGEEDSDLSPEEREKKRQFEM) are disordered. Phosphoserine is present on residues Ser-121, Ser-122, Ser-127, and Ser-130. Residues 121 to 130 (SSGEEDSDLS) are compositionally biased toward acidic residues. Residues 131-142 (PEEREKKRQFEM) are compositionally biased toward basic and acidic residues. The tract at residues 147-150 (HYNE) is required for binding PPP1CC catalytic center, displacing metal ions and inhibition of PPP1CC catalytic activity. Residues 163–205 (KDLHDDDEDEEMLETADGESMNTEESNQGSTPSDQQQNKLRSS) form a disordered region. The segment covering 167 to 179 (DDDEDEEMLETAD) has biased composition (acidic residues). Residues 182–205 (SMNTEESNQGSTPSDQQQNKLRSS) are compositionally biased toward polar residues.

It belongs to the protein phosphatase inhibitor 2 family. Interacts with PPP1CC. Only detected in spermatozoa, both heads and tails.

Inhibitor of protein-phosphatase 1. The chain is Protein phosphatase inhibitor 2 family member B from Homo sapiens (Human).